The primary structure comprises 687 residues: A-kinase anchor protein 8 (687 aa).

Residues 1–195 form an interaction with MCM2 region; the sequence is MEQGYGGYGA…FLRGRGQGRF (195 aa). An interaction with DPY30 region spans residues 1-210; it reads MEQGYGGYGA…SSTFIRSDPF (210 aa). Residue S72 is modified to Phosphoserine. Disordered regions lie at residues 105–124 and 185–218; these read KEGG…DRDS and GFLR…ASEP. R109 carries the asymmetric dimethylarginine; alternate modification. Position 109 is an omega-N-methylarginine; alternate (R109). A compositionally biased stretch (gly residues) spans 109 to 118; the sequence is RGGISSGGEG. The tract at residues 109 to 201 is interaction with DDX5; it reads RGGISSGGEG…QGRFQDRSNS (93 aa). Phosphoserine is present on S199. R232 and R276 each carry omega-N-methylarginine. Residues 277-379 are disordered; it reads SQTRIRDWPR…KQRRRDRMRD (103 aa). Composition is skewed to basic and acidic residues over residues 280–294 and 311–320; these read RIRD…ERFG and PDAKLARADS. The Bipartite nuclear localization signal signature appears at 286-303; it reads RRRGFERFGPDNMGRKRK. Residue K314 forms a Glycyl lysine isopeptide (Lys-Gly) (interchain with G-Cter in SUMO2) linkage. Phosphoserine occurs at positions 320, 325, and 336. A compositionally biased stretch (acidic residues) spans 321–331; that stretch reads DGDLSENDDGA. Residues 335–357 are compositionally biased toward basic and acidic residues; sequence RSGDEEFRGEDDLCDSRKQRGEK. The interval 384 to 447 is involved in chromatin-binding; it reads RIQFACSVCK…NKKIEKRRQE (64 aa). C2H2 AKAP95-type zinc fingers lie at residues 389 to 411 and 478 to 501; these read CSVC…SKFH and CLAC…SVDH. The involved in condensin complex recruitment stretch occupies residues 522–565; it reads SVLNNKHIVKMLEKYLKGEDPFVNETADLETEGDENVGEEKEET. T552 carries the phosphothreonine modification. Residues 568–585 are RII-binding; sequence EVAAEVLAEVITAAVKAV. Positions 572–589 are required for interaction with MYCBP; the sequence is EVLAEVITAAVKAVEGEG. The segment at 624–659 is disordered; sequence QTCEAASETRSIEDKTRGEAAEARNEAAMPTADAGS. The span at 633–648 shows a compositional bias: basic and acidic residues; it reads RSIEDKTRGEAAEARN. S659 bears the Phosphoserine mark.

Belongs to the AKAP95 family. Binds to the PKA RII-alpha regulatory subunit PRKAR2A. Interacts (via C-terminus) with FIGN. Interacts with NCAPD2, CCND3, CCNE1, MCM2, RPS6KA1, DDX5, PDE4A. Interacts with MYCBP; MYCBP is translocated to the nucleus and the interaction prevents the association of the PKA catalytic subunit leading to suppression of PKA activity. Interacts with CCND1, CASP3. Interacts with NFKB1; detetcted in the cytoplasm. Interacts with DPY30; mediating AKAP8 association with at least the MLL4/WBP7 HMT complex. Interacts with HDAC3; increased during mitosis. Interacts with GJA1; in the nucleus and in the nuclear membrane; the nuclear association increases with progress of cell cycle G1, S and G2 phase and decreases in M phase. Phosphorylated on tyrosine residues probably by SRC subfamily protein kinases; multiple phosphorylation is leading to dissociation from nuclear structures implicated in chromatin structural changes.

The protein localises to the nucleus matrix. It is found in the nucleus. The protein resides in the nucleolus. It localises to the cytoplasm. Functionally, anchoring protein that mediates the subcellular compartmentation of cAMP-dependent protein kinase (PKA type II). Acts as an anchor for a PKA-signaling complex onto mitotic chromosomes, which is required for maintenance of chromosomes in a condensed form throughout mitosis. Recruits condensin complex subunit NCAPD2 to chromosomes required for chromatin condensation; the function appears to be independent from PKA-anchoring. Specifically involved in recruitment of CAPD2 to, and condensation of maternal but not paternal chromosomes. May help to deliver cyclin D/E to CDK4 to facilitate cell cycle progression. Required for cell cycle G2/M transition and histone deacetylation during mitosis. In mitotic cells recruits HDAC3 to the vicinity of chromatin leading to deacetylation and subsequent phosphorylation at 'Ser-10' of histone H3; in this function may act redundantly with AKAP8L. Involved in nuclear retention of RPS6KA1 upon ERK activation thus inducing cell proliferation. May be involved in regulation of DNA replication by acting as scaffold for MCM2. Enhances HMT activity of the KMT2 family MLL4/WBP7 complex and is involved in transcriptional regulation. In a teratocarcinoma cell line is involved in retinoic acid-mediated induction of developmental genes implicating H3 'Lys-4' methylation. May be involved in recruitment of active CASP3 to the nucleus in apoptotic cells. May act as a carrier protein of GJA1 for its transport to the nucleus. May play a repressive role in the regulation of rDNA transcription. Preferentially binds GC-rich DNA in vitro. In cells, associates with ribosomal RNA (rRNA) chromatin, preferentially with rRNA promoter and transcribed regions. Involved in modulation of Toll-like receptor signaling. Required for the cAMP-dependent suppression of TNF-alpha in early stages of LPS-induced macrophage activation; the function probably implicates targeting of PKA to NFKB1. The sequence is that of A-kinase anchor protein 8 (Akap8) from Mus musculus (Mouse).